The following is a 142-amino-acid chain: Galactose-6-phosphate isomerase subunit LacA 2 (142 aa).

Belongs to the LacAB/RpiB family. In terms of assembly, heteromultimeric protein consisting of LacA and LacB.

It catalyses the reaction aldehydo-D-galactose 6-phosphate = keto-D-tagatose 6-phosphate. Its pathway is carbohydrate metabolism; D-galactose 6-phosphate degradation; D-tagatose 6-phosphate from D-galactose 6-phosphate: step 1/1. This chain is Galactose-6-phosphate isomerase subunit LacA 2, found in Streptococcus pyogenes serotype M3 (strain ATCC BAA-595 / MGAS315).